We begin with the raw amino-acid sequence, 75 residues long: MSRVCPLTLKKCNHAFRVTYSHKRNHRRQFVNLQKKRIFINNEWVVLKISTKAIKTLKSKTLKSKTFSNARLLHL.

It belongs to the bacterial ribosomal protein bL28 family.

Its subcellular location is the plastid. It is found in the chloroplast. The protein is Large ribosomal subunit protein bL28c of Cyanidioschyzon merolae (strain NIES-3377 / 10D) (Unicellular red alga).